We begin with the raw amino-acid sequence, 87 residues long: MANIKSAKKRIKVTETKTLNNRMIKSALKTVIKKFEAAVAGNNVEEAKTVFVAVTKSLDVAASKGVVHKNMAARKKSRLAAKLNAMA.

The protein belongs to the bacterial ribosomal protein bS20 family.

Its function is as follows. Binds directly to 16S ribosomal RNA. This is Small ribosomal subunit protein bS20 from Clostridium botulinum (strain Eklund 17B / Type B).